The primary structure comprises 95 residues: Small ribosomal subunit protein bS6 (95 aa).

Belongs to the bacterial ribosomal protein bS6 family.

Binds together with bS18 to 16S ribosomal RNA. This is Small ribosomal subunit protein bS6 from Corynebacterium glutamicum (strain ATCC 13032 / DSM 20300 / JCM 1318 / BCRC 11384 / CCUG 27702 / LMG 3730 / NBRC 12168 / NCIMB 10025 / NRRL B-2784 / 534).